We begin with the raw amino-acid sequence, 379 residues long: 1-deoxy-D-xylulose 5-phosphate reductoisomerase (379 aa).

Residues Thr-10, Gly-11, Ser-12, Ile-13, Arg-38, Asn-39, and Asn-121 each coordinate NADPH. Lys-122 contributes to the 1-deoxy-D-xylulose 5-phosphate binding site. Glu-123 is an NADPH binding site. Asp-147 provides a ligand contact to Mn(2+). Ser-148, Glu-149, Ser-173, and His-196 together coordinate 1-deoxy-D-xylulose 5-phosphate. Glu-149 lines the Mn(2+) pocket. Residue Gly-202 coordinates NADPH. Residues Ser-209, Asn-214, Lys-215, and Glu-218 each contribute to the 1-deoxy-D-xylulose 5-phosphate site. Glu-218 is a Mn(2+) binding site.

It belongs to the DXR family. It depends on Mg(2+) as a cofactor. The cofactor is Mn(2+).

It carries out the reaction 2-C-methyl-D-erythritol 4-phosphate + NADP(+) = 1-deoxy-D-xylulose 5-phosphate + NADPH + H(+). The protein operates within isoprenoid biosynthesis; isopentenyl diphosphate biosynthesis via DXP pathway; isopentenyl diphosphate from 1-deoxy-D-xylulose 5-phosphate: step 1/6. Functionally, catalyzes the NADPH-dependent rearrangement and reduction of 1-deoxy-D-xylulose-5-phosphate (DXP) to 2-C-methyl-D-erythritol 4-phosphate (MEP). In Chlamydia trachomatis serovar L2 (strain ATCC VR-902B / DSM 19102 / 434/Bu), this protein is 1-deoxy-D-xylulose 5-phosphate reductoisomerase.